Here is a 230-residue protein sequence, read N- to C-terminus: tRNA pseudouridine synthase B (230 aa).

The active-site Nucleophile is Asp45.

The protein belongs to the pseudouridine synthase TruB family. Type 1 subfamily.

It carries out the reaction uridine(55) in tRNA = pseudouridine(55) in tRNA. Functionally, responsible for synthesis of pseudouridine from uracil-55 in the psi GC loop of transfer RNAs. The polypeptide is tRNA pseudouridine synthase B (Endomicrobium trichonymphae).